Consider the following 544-residue polypeptide: Apolipoprotein N-acyltransferase 1 (544 aa).

A run of 6 helical transmembrane segments spans residues 30 to 50 (LNLN…FLLL), 57 to 79 (FSFL…WIIF), 91 to 111 (KYCI…SYFS), 115 to 135 (FIFQ…GFLG), 157 to 177 (IFGV…SASF), and 197 to 217 (PMMI…FTKI). The CN hydrolase domain occupies 225–501 (ARIALVQPNR…KDILVADVTV (277 aa)). Glu272 (proton acceptor) is an active-site residue. Lys360 is a catalytic residue. Cys412 functions as the Nucleophile in the catalytic mechanism. A helical membrane pass occupies residues 514–534 (GDFFGVLCTIVLILNLCFIII).

The protein belongs to the CN hydrolase family. Apolipoprotein N-acyltransferase subfamily.

It localises to the cell inner membrane. It catalyses the reaction N-terminal S-1,2-diacyl-sn-glyceryl-L-cysteinyl-[lipoprotein] + a glycerophospholipid = N-acyl-S-1,2-diacyl-sn-glyceryl-L-cysteinyl-[lipoprotein] + a 2-acyl-sn-glycero-3-phospholipid + H(+). It functions in the pathway protein modification; lipoprotein biosynthesis (N-acyl transfer). In terms of biological role, catalyzes the phospholipid dependent N-acylation of the N-terminal cysteine of apolipoprotein, the last step in lipoprotein maturation. This Treponema denticola (strain ATCC 35405 / DSM 14222 / CIP 103919 / JCM 8153 / KCTC 15104) protein is Apolipoprotein N-acyltransferase 1.